Reading from the N-terminus, the 436-residue chain is GDP-mannose 6-dehydrogenase (436 aa).

NAD(+) is bound by residues Tyr-10, Val-11, Asp-30, Lys-35, Thr-86, and Thr-124. 10 residues coordinate GDP-alpha-D-mannuronate: Glu-161, Lys-210, Asn-214, His-217, Asn-225, Tyr-256, Tyr-257, Arg-259, Phe-262, and Gly-265. Cys-268 (nucleophile) is an active-site residue. Lys-271 contributes to the NAD(+) binding site. The inter-domain linker stretch occupies residues 278–295 (YRASQLDVEHPMLGSLMR). Lys-324 is a binding site for GDP-alpha-D-mannuronate. Arg-331 serves as a coordination point for NAD(+).

This sequence belongs to the UDP-glucose/GDP-mannose dehydrogenase family. In terms of assembly, forms a domain-swapped dimer with each peptide contributing to each active site. The dimers assemble further. X-ray structures indicate this enzyme exists as a homotetramer PubMed:12705829, but kinetic and physical results obtained in PubMed:2470755 and PubMed:12135385 indicate that it is probably a homohexamer.

The catalysed reaction is GDP-alpha-D-mannose + 2 NAD(+) + H2O = GDP-alpha-D-mannuronate + 2 NADH + 3 H(+). Its pathway is glycan biosynthesis; alginate biosynthesis. With respect to regulation, inhibited by GMP, ATP, GDP-D-glucose and maltose. Inhibited by GMP and deamidoNAD. Functionally, catalyzes the oxidation of guanosine diphospho-D-mannose (GDP-D-mannose) to GDP-D-mannuronic acid, a precursor for alginate polymerization. The alginate layer causes a mucoid phenotype and provides a protective barrier against host immune defenses and antibiotics. Other sugars are not used as substrates. The chain is GDP-mannose 6-dehydrogenase from Pseudomonas aeruginosa (strain ATCC 15692 / DSM 22644 / CIP 104116 / JCM 14847 / LMG 12228 / 1C / PRS 101 / PAO1).